A 560-amino-acid chain; its full sequence is Choline/ethanolamine transporter FLVCR1 (560 aa).

The disordered stretch occupies residues 1 to 22 (MVKLNDEEGAAMAPGHQPTNGY). Residues 1–99 (MVKLNDEEGA…TPGTEGSPAP (99 aa)) are Cytoplasmic-facing. Ser56 is subject to Phosphoserine. Positions 68 to 99 (QTPLAPEEETQTRLLPTGPGEETPGTEGSPAP) are disordered. The span at 83-95 (PTGPGEETPGTEG) shows a compositional bias: low complexity. The chain crosses the membrane as a helical span at residues 100-124 (QTALSARRFVVLLIFSLYSLVNAFQ). The Extracellular portion of the chain corresponds to 125–142 (WIQYSVISNVFEGFYGVS). A helical membrane pass occupies residues 143–170 (SLHIDWLSMVYMLAYVPLIFPATWLLDT). At 171 to 172 (RG) the chain is on the cytoplasmic side. Residues 173–192 (LRLTALLGSGLNCLGAWVKC) form a helical membrane-spanning segment. At 193–199 (ASVQQHL) the chain is on the extracellular side. A helical transmembrane segment spans residues 200–228 (FWVTMLGQCLCSVAQVFILGLPSRIASVW). Gln214 serves as a coordination point for ethanolamine. At 229–233 (FGPKE) the chain is on the cytoplasmic side. Residues 234 to 259 (VSTACATAVLGNQLGAAIGFLLPPVL) traverse the membrane as a helical segment. Residues 260–265 (VPNTQN) are Extracellular-facing. Asn265 is a glycosylation site (N-linked (GlcNAc...) asparagine). The helical transmembrane segment at 266–295 (NTDLLACNISTMFYGTSSVATFLCFLTIIA) threads the bilayer. The Cytoplasmic segment spans residues 296–331 (FKEKPQYPPSQAQAALQNSPPAKYSYKKSIRNLFRN). A helical membrane pass occupies residues 332–362 (VPFVLLLITYGIITGAFYSVSTLLNQMILTY). Over 363-366 (YKGE) the chain is Extracellular. Residues 367–395 (EVSAGKIGLTLVVAGMVGSILCGFWLDYT) traverse the membrane as a helical segment. Residues 396–397 (KI) are Cytoplasmic-facing. The helical transmembrane segment at 398 to 420 (YKQTTLIVYILSFLGMVIFTFTL) threads the bilayer. The Extracellular segment spans residues 421 to 423 (DLG). A helical transmembrane segment spans residues 424-453 (YGIVVFVTGGVLGFFMTGYLPLGFEFAVEI). The Cytoplasmic portion of the chain corresponds to 454–461 (TYPESEGT). The helical transmembrane segment at 462–487 (SSGLLNAAAQIFGILFTLAQGKLTTD) threads the bilayer. Residue Gln471 coordinates ethanolamine. Residue Gln471 participates in choline binding. The Extracellular portion of the chain corresponds to 488 to 489 (YS). Residues 490 to 512 (PKAGNIFLCVWLFLGIILTALIK) traverse the membrane as a helical segment. Residues 513–560 (SDLRRHNINIGIANGDIKAVPVEDTVEDSPTDKESKTIVMSKQSESAI) lie on the Cytoplasmic side of the membrane. Residues 537–560 (TVEDSPTDKESKTIVMSKQSESAI) form a disordered region. Ser541 bears the Phosphoserine mark. A compositionally biased stretch (polar residues) spans 550-560 (IVMSKQSESAI).

The protein belongs to the major facilitator superfamily. Feline leukemia virus subgroup C receptor (TC 2.A.1.28.1) family.

Its subcellular location is the cell membrane. It carries out the reaction choline(out) = choline(in). The catalysed reaction is ethanolamine(in) = ethanolamine(out). It catalyses the reaction heme b(in) = heme b(out). Its function is as follows. Uniporter that mediates the transport of extracellular choline and ethanolamine into cells, thereby playing a key role in phospholipid biosynthesis. Choline and ethanolamine are the precursors of phosphatidylcholine and phosphatidylethanolamine, respectively, the two most abundant phospholipids. Transport is not coupled with proton transport and is exclusively driven by the choline (or ethanolamine) gradient across the plasma membrane. Also acts as a heme b transporter that mediates heme efflux from the cytoplasm to the extracellular compartment. (Microbial infection) Confers susceptibility to Feline leukemia virus subgroup C (FeLV-C) infection, which is associated with fatal erythroid aplasia, also known as aplastic anemia. The chain is Choline/ethanolamine transporter FLVCR1 (FLVCR1) from Felis catus (Cat).